A 339-amino-acid chain; its full sequence is Putative adenosine/adenine deaminase (339 aa).

The Zn(2+) site is built by H16, H18, and H200. Position 18 (H18) interacts with substrate. Catalysis depends on E203, which acts as the Proton donor. Residue D281 participates in Zn(2+) binding. A substrate-binding site is contributed by D282.

Belongs to the metallo-dependent hydrolases superfamily. Adenosine and AMP deaminases family. Zn(2+) is required as a cofactor.

Its function is as follows. Putative nucleoside deaminase. May catalyze the hydrolytic deamination of adenosine or some similar substrate and play a role in purine metabolism. In Streptomyces virginiae (Streptomyces cinnamonensis), this protein is Putative adenosine/adenine deaminase.